Here is a 217-residue protein sequence, read N- to C-terminus: Adenylate kinase (217 aa).

An ATP-binding site is contributed by 10–15 (GAGKGT). The NMP stretch occupies residues 30 to 59 (STGDMLRAAVKAGTPLGIEAKKVMDAGGLV). AMP contacts are provided by residues threonine 31, arginine 36, 57-59 (GLV), 85-88 (GFPR), and glutamine 92. The LID stretch occupies residues 122-159 (GRRAHLASGRTYHVKYNPPKVEGKDDVTGEDLVQRDDD). ATP contacts are provided by residues arginine 123 and 132 to 133 (TY). AMP is bound by residues arginine 156 and arginine 167. Glycine 203 contacts ATP.

Belongs to the adenylate kinase family. Monomer.

It localises to the cytoplasm. It catalyses the reaction AMP + ATP = 2 ADP. It participates in purine metabolism; AMP biosynthesis via salvage pathway; AMP from ADP: step 1/1. Its function is as follows. Catalyzes the reversible transfer of the terminal phosphate group between ATP and AMP. Plays an important role in cellular energy homeostasis and in adenine nucleotide metabolism. This is Adenylate kinase from Azoarcus sp. (strain BH72).